The following is a 300-amino-acid chain: 4-hydroxy-tetrahydrodipicolinate synthase (300 aa).

Threonine 55 is a binding site for pyruvate. The active-site Proton donor/acceptor is the tyrosine 143. Catalysis depends on lysine 171, which acts as the Schiff-base intermediate with substrate. Isoleucine 211 serves as a coordination point for pyruvate.

It belongs to the DapA family. In terms of assembly, homotetramer; dimer of dimers.

Its subcellular location is the cytoplasm. It carries out the reaction L-aspartate 4-semialdehyde + pyruvate = (2S,4S)-4-hydroxy-2,3,4,5-tetrahydrodipicolinate + H2O + H(+). It functions in the pathway amino-acid biosynthesis; L-lysine biosynthesis via DAP pathway; (S)-tetrahydrodipicolinate from L-aspartate: step 3/4. In terms of biological role, catalyzes the condensation of (S)-aspartate-beta-semialdehyde [(S)-ASA] and pyruvate to 4-hydroxy-tetrahydrodipicolinate (HTPA). The chain is 4-hydroxy-tetrahydrodipicolinate synthase from Mycolicibacterium paratuberculosis (strain ATCC BAA-968 / K-10) (Mycobacterium paratuberculosis).